The primary structure comprises 189 residues: UPF0312 protein VPA0850 (189 aa).

The N-terminal stretch at 1–22 (MKKSLFATGLAIAMALPLGAQA) is a signal peptide.

The protein belongs to the UPF0312 family. Type 1 subfamily.

The protein resides in the periplasm. The sequence is that of UPF0312 protein VPA0850 from Vibrio parahaemolyticus serotype O3:K6 (strain RIMD 2210633).